The following is a 376-amino-acid chain: S-adenosylmethionine synthase (376 aa).

Residue H15 participates in ATP binding. D17 contacts Mg(2+). E43 serves as a coordination point for K(+). Residues E56 and Q92 each contribute to the L-methionine site. The interval 92 to 102 is flexible loop; the sequence is QSKEIANQVDR. ATP-binding positions include 156–158, D231, 237–238, A254, and K258; these read DMK and RK. D231 contributes to the L-methionine binding site. K262 serves as a coordination point for L-methionine.

This sequence belongs to the AdoMet synthase family. As to quaternary structure, homotetramer; dimer of dimers. The cofactor is Mg(2+). K(+) is required as a cofactor.

The protein localises to the cytoplasm. It carries out the reaction L-methionine + ATP + H2O = S-adenosyl-L-methionine + phosphate + diphosphate. It participates in amino-acid biosynthesis; S-adenosyl-L-methionine biosynthesis; S-adenosyl-L-methionine from L-methionine: step 1/1. Its function is as follows. Catalyzes the formation of S-adenosylmethionine (AdoMet) from methionine and ATP. The overall synthetic reaction is composed of two sequential steps, AdoMet formation and the subsequent tripolyphosphate hydrolysis which occurs prior to release of AdoMet from the enzyme. The polypeptide is S-adenosylmethionine synthase (Mycoplasmopsis pulmonis (strain UAB CTIP) (Mycoplasma pulmonis)).